The chain runs to 48 residues: Delta-stichotoxin-She1a (48 aa).

Disulfide bonds link C3–C43, C5–C33, and C26–C44.

This sequence belongs to the sea anemone sodium channel inhibitory toxin family. Type II subfamily.

The protein localises to the secreted. The protein resides in the nematocyst. Binds specifically to voltage-gated sodium channels (Nav), thereby delaying their inactivation during signal transduction. Is highly toxic to crabs (by intrahemocoelic injection), but without effect upon mice (by intraperitoneal injection). This chain is Delta-stichotoxin-She1a, found in Stichodactyla helianthus (Sun anemone).